We begin with the raw amino-acid sequence, 56 residues long: Large ribosomal subunit protein bL33 (56 aa).

It belongs to the bacterial ribosomal protein bL33 family.

The protein is Large ribosomal subunit protein bL33 of Rickettsia africae (strain ESF-5).